Here is a 243-residue protein sequence, read N- to C-terminus: Tryptophan synthase alpha chain (243 aa).

Active-site proton acceptor residues include glutamate 31 and aspartate 42.

It belongs to the TrpA family. In terms of assembly, tetramer of two alpha and two beta chains.

It carries out the reaction (1S,2R)-1-C-(indol-3-yl)glycerol 3-phosphate + L-serine = D-glyceraldehyde 3-phosphate + L-tryptophan + H2O. The protein operates within amino-acid biosynthesis; L-tryptophan biosynthesis; L-tryptophan from chorismate: step 5/5. In terms of biological role, the alpha subunit is responsible for the aldol cleavage of indoleglycerol phosphate to indole and glyceraldehyde 3-phosphate. This is Tryptophan synthase alpha chain from Staphylococcus haemolyticus (strain JCSC1435).